The primary structure comprises 140 residues: MIDIQEIKEALPHRYPMLLVDRVLEVSEDTIVAIKNVTINEPFFNGHFPQYPVMPGVLIMEALAQTAGVLELSKPENKGKLVFYAGMDKVKFKKQVVPGDQLVMTATFVKRRGTIAVVEAKAEVDGKLAASGILTFAIGN.

His-47 is a catalytic residue.

The protein belongs to the thioester dehydratase family. FabZ subfamily.

Its subcellular location is the cytoplasm. The enzyme catalyses a (3R)-hydroxyacyl-[ACP] = a (2E)-enoyl-[ACP] + H2O. Its function is as follows. Involved in unsaturated fatty acids biosynthesis. Catalyzes the dehydration of short chain beta-hydroxyacyl-ACPs and long chain saturated and unsaturated beta-hydroxyacyl-ACPs. The polypeptide is 3-hydroxyacyl-[acyl-carrier-protein] dehydratase FabZ (Streptococcus pneumoniae (strain CGSP14)).